Reading from the N-terminus, the 67-residue chain is Large ribosomal subunit protein bL35 (67 aa).

The protein belongs to the bacterial ribosomal protein bL35 family.

This Agrobacterium fabrum (strain C58 / ATCC 33970) (Agrobacterium tumefaciens (strain C58)) protein is Large ribosomal subunit protein bL35.